Reading from the N-terminus, the 296-residue chain is Gamma-D-glutamyl-L-lysine dipeptidyl-peptidase (296 aa).

Substrate contacts are provided by residues tyrosine 90, 199-201 (DCS), and 218-219 (DA). The 126-residue stretch at 170 to 295 (KGTAEDIIQT…ELCAVRRCFS (126 aa)) folds into the NlpC/P60 domain. Cysteine 200 (nucleophile) is an active-site residue. Histidine 253 (proton acceptor) is an active-site residue. Histidine 265 is a catalytic residue.

It belongs to the peptidase C40 family.

It carries out the reaction The enzyme releases L-Ala-gamma-D-Glu dipeptides from cell wall peptides via cleavage of an L-Ala-gamma-D-Glu-|-L-Lys bond.. The protein operates within cell wall degradation; peptidoglycan degradation. Its function is as follows. Specifically hydrolyzes gamma-D-glutamyl-L-lysine bonds in murein peptides, releasing L-Ala-D-Glu. The polypeptide is Gamma-D-glutamyl-L-lysine dipeptidyl-peptidase (ykfC) (Bacillus subtilis (strain 168)).